The primary structure comprises 312 residues: tRNA dimethylallyltransferase (312 aa).

13–20 (GPTAVGKT) is an ATP binding site. 15–20 (TAVGKT) is a binding site for substrate. 2 interaction with substrate tRNA regions span residues 38–41 (DSVQ) and 163–167 (QRVVR).

It belongs to the IPP transferase family. Monomer. Mg(2+) serves as cofactor.

It catalyses the reaction adenosine(37) in tRNA + dimethylallyl diphosphate = N(6)-dimethylallyladenosine(37) in tRNA + diphosphate. Catalyzes the transfer of a dimethylallyl group onto the adenine at position 37 in tRNAs that read codons beginning with uridine, leading to the formation of N6-(dimethylallyl)adenosine (i(6)A). This chain is tRNA dimethylallyltransferase, found in Exiguobacterium sibiricum (strain DSM 17290 / CCUG 55495 / CIP 109462 / JCM 13490 / 255-15).